We begin with the raw amino-acid sequence, 207 residues long: Sodium/potassium-transporting ATPase subunit beta-1-interacting protein 1 (207 aa).

Transmembrane regions (helical) follow at residues 2-22, 35-55, and 62-82; these read GKCSGRCTLVAFCCLQLVAAL, APILANFLHIMAVILGIFGTV, and LILYAAWLVLWVGWNAFIICF. Asn-100 is a glycosylation site (N-linked (GlcNAc...) asparagine). The helical transmembrane segment at 147-167 threads the bilayer; the sequence is ALSSALQIFLALFGFVFACYV.

Belongs to the NKAIN family. In terms of assembly, interacts with ATP1B1 C-terminus. As to expression, detected in the brain only and specifically in neurons. Expressed in multiple regions such as cerebral cortex, thalamus, hippocampus, olfactory bulb and brainstem as well as in cerebellum with high expression in granular cell layer.

It localises to the cell membrane. This chain is Sodium/potassium-transporting ATPase subunit beta-1-interacting protein 1 (Nkain1), found in Mus musculus (Mouse).